A 415-amino-acid polypeptide reads, in one-letter code: Multifunctional CCA protein (415 aa).

2 residues coordinate ATP: Gly8 and Arg11. CTP contacts are provided by Gly8 and Arg11. Glu21 and Asp23 together coordinate Mg(2+). The ATP site is built by Arg91, Arg137, and Arg140. Arg91, Arg137, and Arg140 together coordinate CTP. An HD domain is found at 228 to 329 (AGTHTLMALD…VELFEGLDLF (102 aa)).

Belongs to the tRNA nucleotidyltransferase/poly(A) polymerase family. Bacterial CCA-adding enzyme type 1 subfamily. As to quaternary structure, monomer. Can also form homodimers and oligomers. It depends on Mg(2+) as a cofactor. The cofactor is Ni(2+).

The enzyme catalyses a tRNA precursor + 2 CTP + ATP = a tRNA with a 3' CCA end + 3 diphosphate. It carries out the reaction a tRNA with a 3' CCA end + 2 CTP + ATP = a tRNA with a 3' CCACCA end + 3 diphosphate. Its function is as follows. Catalyzes the addition and repair of the essential 3'-terminal CCA sequence in tRNAs without using a nucleic acid template. Adds these three nucleotides in the order of C, C, and A to the tRNA nucleotide-73, using CTP and ATP as substrates and producing inorganic pyrophosphate. tRNA 3'-terminal CCA addition is required both for tRNA processing and repair. Also involved in tRNA surveillance by mediating tandem CCA addition to generate a CCACCA at the 3' terminus of unstable tRNAs. While stable tRNAs receive only 3'-terminal CCA, unstable tRNAs are marked with CCACCA and rapidly degraded. The chain is Multifunctional CCA protein from Halorhodospira halophila (strain DSM 244 / SL1) (Ectothiorhodospira halophila (strain DSM 244 / SL1)).